The sequence spans 562 residues: Arginine--tRNA ligase 2 (562 aa).

Positions 122–132 (PNIAKPFSMGH) match the 'HIGH' region motif.

The protein belongs to the class-I aminoacyl-tRNA synthetase family. As to quaternary structure, monomer.

The protein resides in the cytoplasm. The enzyme catalyses tRNA(Arg) + L-arginine + ATP = L-arginyl-tRNA(Arg) + AMP + diphosphate. In Bacillus anthracis, this protein is Arginine--tRNA ligase 2 (argS2).